The following is a 195-amino-acid chain: Imidazoleglycerol-phosphate dehydratase (195 aa).

Belongs to the imidazoleglycerol-phosphate dehydratase family.

It localises to the cytoplasm. It catalyses the reaction D-erythro-1-(imidazol-4-yl)glycerol 3-phosphate = 3-(imidazol-4-yl)-2-oxopropyl phosphate + H2O. The protein operates within amino-acid biosynthesis; L-histidine biosynthesis; L-histidine from 5-phospho-alpha-D-ribose 1-diphosphate: step 6/9. The sequence is that of Imidazoleglycerol-phosphate dehydratase from Maridesulfovibrio salexigens (strain ATCC 14822 / DSM 2638 / NCIMB 8403 / VKM B-1763) (Desulfovibrio salexigens).